The primary structure comprises 204 residues: Urease accessory protein UreG (204 aa).

A GTP-binding site is contributed by 12-19 (GPVGSGKT).

It belongs to the SIMIBI class G3E GTPase family. UreG subfamily. Homodimer. UreD, UreF and UreG form a complex that acts as a GTP-hydrolysis-dependent molecular chaperone, activating the urease apoprotein by helping to assemble the nickel containing metallocenter of UreC. The UreE protein probably delivers the nickel.

It localises to the cytoplasm. Its function is as follows. Facilitates the functional incorporation of the urease nickel metallocenter. This process requires GTP hydrolysis, probably effectuated by UreG. The sequence is that of Urease accessory protein UreG from Pseudomonas fluorescens (strain ATCC BAA-477 / NRRL B-23932 / Pf-5).